The following is a 512-amino-acid chain: ATP synthase subunit alpha 1 (512 aa).

169–176 is an ATP binding site; it reads GDRQTGKT.

The protein belongs to the ATPase alpha/beta chains family. In terms of assembly, F-type ATPases have 2 components, CF(1) - the catalytic core - and CF(0) - the membrane proton channel. CF(1) has five subunits: alpha(3), beta(3), gamma(1), delta(1), epsilon(1). CF(0) has four main subunits: a(1), b(1), b'(1) and c(9-12).

It localises to the cell inner membrane. The catalysed reaction is ATP + H2O + 4 H(+)(in) = ADP + phosphate + 5 H(+)(out). In terms of biological role, produces ATP from ADP in the presence of a proton gradient across the membrane. The alpha chain is a regulatory subunit. The protein is ATP synthase subunit alpha 1 of Cereibacter sphaeroides (strain ATCC 17029 / ATH 2.4.9) (Rhodobacter sphaeroides).